A 156-amino-acid chain; its full sequence is SsrA-binding protein (156 aa).

This sequence belongs to the SmpB family.

The protein localises to the cytoplasm. Its function is as follows. Required for rescue of stalled ribosomes mediated by trans-translation. Binds to transfer-messenger RNA (tmRNA), required for stable association of tmRNA with ribosomes. tmRNA and SmpB together mimic tRNA shape, replacing the anticodon stem-loop with SmpB. tmRNA is encoded by the ssrA gene; the 2 termini fold to resemble tRNA(Ala) and it encodes a 'tag peptide', a short internal open reading frame. During trans-translation Ala-aminoacylated tmRNA acts like a tRNA, entering the A-site of stalled ribosomes, displacing the stalled mRNA. The ribosome then switches to translate the ORF on the tmRNA; the nascent peptide is terminated with the 'tag peptide' encoded by the tmRNA and targeted for degradation. The ribosome is freed to recommence translation, which seems to be the essential function of trans-translation. The polypeptide is SsrA-binding protein (Desulfitobacterium hafniense (strain DSM 10664 / DCB-2)).